A 486-amino-acid polypeptide reads, in one-letter code: RAC-beta serine/threonine-protein kinase A (486 aa).

The region spanning 5–110 is the PH domain; that stretch reads MVIKEGWLQK…WIIAIQTVAN (106 aa). O-linked (GlcNAc) serine glycans are attached at residues S133 and S136. The Protein kinase domain occupies 157–414; the sequence is FDYLKLLGKG…AQEVMSHRFF (258 aa). ATP is bound by residues 163-171 and K186; that span reads LGKGTFGKV. The active-site Proton acceptor is D280. T311 carries an O-linked (GlcNAc) threonine glycan. Phosphothreonine is present on T314. T318 is a glycosylation site (O-linked (GlcNAc) threonine). The AGC-kinase C-terminal domain maps to 415–486; sequence VSINWQDVTE…QFSYSASIRE (72 aa). The disordered stretch occupies residues 455–486; sequence LTPPDRYDNLDALESDQRPHFPQFSYSASIRE. Residues 459–473 show a composition bias toward basic and acidic residues; that stretch reads DRYDNLDALESDQRP. Position 479 is a phosphoserine (S479). S479 carries O-linked (GlcNAc) serine; alternate glycosylation.

It belongs to the protein kinase superfamily. AGC Ser/Thr protein kinase family. RAC subfamily. Phosphorylation on Thr-314 and Ser-479 is required for full activity. Phosphorylation of the activation loop at Thr-314 by PDPK1/PDK1 is a prerequisite for full activation. Phosphorylation by mTORC2 at Ser-479 in response to growth factors plays a key role in AKT1 activation by facilitating subsequent phosphorylation of the activation loop by PDPK1/PDK1.

It carries out the reaction L-seryl-[protein] + ATP = O-phospho-L-seryl-[protein] + ADP + H(+). The catalysed reaction is L-threonyl-[protein] + ATP = O-phospho-L-threonyl-[protein] + ADP + H(+). Two specific sites, one in the kinase domain (Thr-314) and the other in the C-terminal regulatory region (Ser-479), need to be phosphorylated for its full activation. In terms of biological role, akt2-a is one of several closely related serine/threonine-protein kinases known as the AKT kinase, and which regulate many processes including metabolism, proliferation, cell survival, growth and angiogenesis. This is mediated through serine and/or threonine phosphorylation of a range of downstream substrates. Over 100 substrate candidates have been reported so far, but for most of them, no isoform specificity has been reported. May be involved in the inhibition of ciliogenesis. This chain is RAC-beta serine/threonine-protein kinase A (akt2-a), found in Xenopus laevis (African clawed frog).